Reading from the N-terminus, the 433-residue chain is MSAGTAKTPLSNSFFSASLADVDPELSRAVQQELGRQQHEIELIASENIVSRAVLEAQGSVLTNKYAEGYPGRRYYGGCEFVDIAENLAIERAKRLFGCDFANVQPNSGSQANQAVFMATMQPGDTFLGLDLAAGGHLTHGAPPNVSGKWFKPVSYTVRREDQRIDMEQVAKLAEEHKPKVIIAGGSGYPRHWDFAKFREIADSVGAVFFVDMAHFAGLVAGGVHPSPFPHAHVVTTTTHKTLRGPRGGMVLTNDEALAKKINSAVFPGLQGGPLMHVIAGKAVAFGEALSPDFKIYAKQVVENAKALADTIISGGFDITTGGTDNHLMLVDMRPKNLTGKAAEAALSRAGITCNKNGVPFDPQKPTVTSGIRLGTPAATSRGFGVAEFKKVGELIVTVLDGLARAGEAGDGAAEKKVLEEVHALTDRFPIYA.

(6S)-5,6,7,8-tetrahydrofolate is bound by residues leucine 132 and 136 to 138; that span reads GHL. Lysine 241 carries the post-translational modification N6-(pyridoxal phosphate)lysine.

This sequence belongs to the SHMT family. In terms of assembly, homodimer. Pyridoxal 5'-phosphate is required as a cofactor.

The protein localises to the cytoplasm. The catalysed reaction is (6R)-5,10-methylene-5,6,7,8-tetrahydrofolate + glycine + H2O = (6S)-5,6,7,8-tetrahydrofolate + L-serine. The protein operates within one-carbon metabolism; tetrahydrofolate interconversion. Its pathway is amino-acid biosynthesis; glycine biosynthesis; glycine from L-serine: step 1/1. Its function is as follows. Catalyzes the reversible interconversion of serine and glycine with tetrahydrofolate (THF) serving as the one-carbon carrier. This reaction serves as the major source of one-carbon groups required for the biosynthesis of purines, thymidylate, methionine, and other important biomolecules. Also exhibits THF-independent aldolase activity toward beta-hydroxyamino acids, producing glycine and aldehydes, via a retro-aldol mechanism. In Methylobacterium sp. (strain 4-46), this protein is Serine hydroxymethyltransferase.